Here is a 161-residue protein sequence, read N- to C-terminus: Putative outer membrane protein YedS (161 aa).

The N-terminal stretch at 1–21 is a signal peptide; the sequence is MKRKVLAMLVPALLVAGAANA.

It belongs to the Gram-negative porin family.

The protein localises to the cell outer membrane. The chain is Putative outer membrane protein YedS (yedS) from Escherichia coli (strain K12).